The primary structure comprises 327 residues: GTPase Obg (327 aa).

Positions 1–159 constitute an Obg domain; the sequence is MKFVDSARIV…LKVDLELKLM (159 aa). A disordered region spans residues 120–145; that stretch reads GGDGGRGNPHFTTSTRQAPRYAEPGG. Positions 160–323 constitute an OBG-type G domain; the sequence is ADVGLVGFPN…LRNALWNTIN (164 aa). GTP is bound by residues 166-173, 191-195, 213-216, 280-283, and 304-306; these read GFPNAGKS, FTTLV, DIPG, TKMD, and SSI. Ser-173 and Thr-193 together coordinate Mg(2+).

Belongs to the TRAFAC class OBG-HflX-like GTPase superfamily. OBG GTPase family. As to quaternary structure, monomer. Requires Mg(2+) as cofactor.

It is found in the cytoplasm. An essential GTPase which binds GTP, GDP and possibly (p)ppGpp with moderate affinity, with high nucleotide exchange rates and a fairly low GTP hydrolysis rate. Plays a role in control of the cell cycle, stress response, ribosome biogenesis and in those bacteria that undergo differentiation, in morphogenesis control. In Prosthecochloris aestuarii (strain DSM 271 / SK 413), this protein is GTPase Obg.